We begin with the raw amino-acid sequence, 212 residues long: Ras-related protein RABC1 (212 aa).

Glycine 2 carries the post-translational modification N-acetylglycine. 20 to 27 (GDSGVGKS) provides a ligand contact to GTP. The Effector region motif lies at 41-49 (LSPTIGVDF). GTP-binding positions include 67–71 (DTAGQ), 127–130 (NKVD), and 157–158 (SA). Residues 182–212 (TAEGSSGGKKNIFKQNPAQTTSTSSSYCCSS) form a disordered region. Low complexity predominate over residues 201 to 212 (TTSTSSSYCCSS). S-geranylgeranyl cysteine attachment occurs at residues cysteine 209 and cysteine 210.

The protein belongs to the small GTPase superfamily. Rab family.

It is found in the cell membrane. In terms of biological role, intracellular vesicle trafficking and protein transport. The chain is Ras-related protein RABC1 (RABC1) from Arabidopsis thaliana (Mouse-ear cress).